We begin with the raw amino-acid sequence, 156 residues long: Cytochrome c-type biogenesis protein CcmE 1 (156 aa).

The Cytoplasmic segment spans residues 1-8 (MNATRRQR). Residues 9–29 (LWWVICVLTAAALAVTLIVFA) traverse the membrane as a helical; Signal-anchor for type II membrane protein segment. Residues 30–156 (LQRNMSYLFT…ATATPLTAPR (127 aa)) are Periplasmic-facing. The heme site is built by His123 and Tyr127. Residues 137-156 (AEGHAGKPIPATATPLTAPR) are disordered. The span at 146–156 (PATATPLTAPR) shows a compositional bias: low complexity.

Belongs to the CcmE/CycJ family.

The protein localises to the cell inner membrane. Its function is as follows. Heme chaperone required for the biogenesis of c-type cytochromes. Transiently binds heme delivered by CcmC and transfers the heme to apo-cytochromes in a process facilitated by CcmF and CcmH. This chain is Cytochrome c-type biogenesis protein CcmE 1, found in Xanthomonas euvesicatoria pv. vesicatoria (strain 85-10) (Xanthomonas campestris pv. vesicatoria).